Consider the following 307-residue polypeptide: Recombination-associated protein RdgC (307 aa).

The protein belongs to the RdgC family.

The protein localises to the cytoplasm. The protein resides in the nucleoid. In terms of biological role, may be involved in recombination. The protein is Recombination-associated protein RdgC of Burkholderia orbicola (strain MC0-3).